We begin with the raw amino-acid sequence, 521 residues long: Glucose-1-phosphate adenylyltransferase large subunit 3, chloroplastic (521 aa).

The transit peptide at 1 to 61 directs the protein to the chloroplast; sequence MDSCCNFSLG…RKLRPGVAYA (61 aa).

Belongs to the bacterial/plant glucose-1-phosphate adenylyltransferase family. Heterotetramer. Probably are expressed in roots, flowers and/or seeds.

The protein localises to the plastid. It is found in the chloroplast. It carries out the reaction alpha-D-glucose 1-phosphate + ATP + H(+) = ADP-alpha-D-glucose + diphosphate. It functions in the pathway glycan biosynthesis; starch biosynthesis. Activated by 3'phosphoglycerate, inhibited by orthophosphate. Allosteric regulation. Functionally, this protein plays a role in synthesis of starch. It catalyzes the synthesis of the activated glycosyl donor, ADP-glucose from Glc-1-P and ATP. This Arabidopsis thaliana (Mouse-ear cress) protein is Glucose-1-phosphate adenylyltransferase large subunit 3, chloroplastic (APL3).